A 555-amino-acid polypeptide reads, in one-letter code: MGLSSPTLILAATVSLLGGIVFGYELGIISGALLVLKTVYQLTCFEQEALVSAVLFGALLASLIGGIIIDRWGRRTAILASNLVVLAGSIILIATSTFWWLIVGRVTIGFAISISSMACCIYVSEIVRPHQRGMLVSLYETGITVGILISYAMNYFLSGVNESWKYMFGLAIVPAAFQFISILFLPSKPHKLNFWEQDTDDGFIELEETGEAGEFKPDTYDRQYTFLDLFRSKDNMRTRTLLGLGLVLFQQFTGQPNVLYYASTIFQSVGFQSNSSAVLASVGLGVVKVASTLIAICFADKAGRRILLLAGCIVMTIAITGIGIVSFTVKMDSHRDCGSVTGRNMSSGESNVSQLLGIVHAETSTINTLDNSVHQLAMAIRSPSLANSASSNHKDLISQNSTVLPASPELPSNYTILNWITLLSMMAFVSAFSIGFGPMTWIVLSEIYPADIRGRAFAFCNSFNWAANLLITLTFLDVIASIGLSWTFLLYGVVGLLAIAFIYFFIPETKGQSLEEIDKQFSTKRILQKRETSKGVGKRPSSGPPYQRIGKASPS.

Topologically, residues 1–15 (MGLSSPTLILAATVS) are cytoplasmic. Residues 16–36 (LLGGIVFGYELGIISGALLVL) traverse the membrane as a helical segment. Residues 37-48 (KTVYQLTCFEQE) lie on the Extracellular side of the membrane. The chain crosses the membrane as a helical span at residues 49 to 69 (ALVSAVLFGALLASLIGGIII). Topologically, residues 70–82 (DRWGRRTAILASN) are cytoplasmic. The helical transmembrane segment at 83–103 (LVVLAGSIILIATSTFWWLIV) threads the bilayer. The Extracellular segment spans residues 104–105 (GR). A helical membrane pass occupies residues 106–126 (VTIGFAISISSMACCIYVSEI). Residues 127–132 (VRPHQR) lie on the Cytoplasmic side of the membrane. Residues 133–153 (GMLVSLYETGITVGILISYAM) form a helical membrane-spanning segment. At 154–165 (NYFLSGVNESWK) the chain is on the extracellular side. N-linked (GlcNAc...) asparagine glycosylation is present at N161. The chain crosses the membrane as a helical span at residues 166–186 (YMFGLAIVPAAFQFISILFLP). At 187–240 (SKPHKLNFWEQDTDDGFIELEETGEAGEFKPDTYDRQYTFLDLFRSKDNMRTRT) the chain is on the cytoplasmic side. A helical membrane pass occupies residues 241 to 261 (LLGLGLVLFQQFTGQPNVLYY). Residue 250 to 251 (QQ) coordinates D-glucose. The Extracellular portion of the chain corresponds to 262–277 (ASTIFQSVGFQSNSSA). N-linked (GlcNAc...) asparagine glycosylation occurs at N274. The chain crosses the membrane as a helical span at residues 278–298 (VLASVGLGVVKVASTLIAICF). Residues 299-305 (ADKAGRR) are Cytoplasmic-facing. A helical membrane pass occupies residues 306–326 (ILLLAGCIVMTIAITGIGIVS). Over 327 to 415 (FTVKMDSHRD…ASPELPSNYT (89 aa)) the chain is Extracellular. Residues N344, N351, N400, and N413 are each glycosylated (N-linked (GlcNAc...) asparagine). Residues 416 to 436 (ILNWITLLSMMAFVSAFSIGF) form a helical membrane-spanning segment. The Cytoplasmic segment spans residues 437-464 (GPMTWIVLSEIYPADIRGRAFAFCNSFN). A D-glucose-binding site is contributed by W441. Residues 465–483 (WAANLLITLTFLDVIASIG) form a helical membrane-spanning segment. Residues 484–485 (LS) are Extracellular-facing. A helical transmembrane segment spans residues 486-506 (WTFLLYGVVGLLAIAFIYFFI). Residues 507–555 (PETKGQSLEEIDKQFSTKRILQKRETSKGVGKRPSSGPPYQRIGKASPS) lie on the Cytoplasmic side of the membrane. The segment at 528-555 (QKRETSKGVGKRPSSGPPYQRIGKASPS) is disordered.

The protein belongs to the major facilitator superfamily. Sugar transporter (TC 2.A.1.1) family. Glucose transporter subfamily.

Its subcellular location is the endomembrane system. It is found in the cytoplasm. The protein resides in the perinuclear region. It catalyses the reaction D-glucose(out) = D-glucose(in). Facilitative glucose transporter required for the development of the cardiovascular system. This is Solute carrier family 2, facilitated glucose transporter member 10 from Xenopus tropicalis (Western clawed frog).